A 250-amino-acid chain; its full sequence is HLA class II histocompatibility antigen, DO alpha chain (250 aa).

The first 25 residues, 1 to 25 (MALRAGLVLGFHTLMTLLSPQEAGA), serve as a signal peptide directing secretion. Residues 26–110 (TKADHMGSYG…ERSNRSRAIN (85 aa)) form an alpha-1 region. Over 26 to 217 (TKADHMGSYG…VPIPPPDAME (192 aa)) the chain is Extracellular. N-linked (GlcNAc...) asparagine glycans are attached at residues asparagine 104 and asparagine 144. Positions 111–204 (VPPRVTVLPK…GLDAPLLRHW (94 aa)) are alpha-2. The 93-residue stretch at 113 to 205 (PRVTVLPKSR…LDAPLLRHWE (93 aa)) folds into the Ig-like C1-type domain. Cysteine 133 and cysteine 189 are joined by a disulfide. Residues 205–217 (ELQVPIPPPDAME) are connecting peptide. Residues 218 to 240 (TLVCALGLAIGLVGFLVGTVLII) traverse the membrane as a helical segment. At 241 to 250 (MGTYVSSVPR) the chain is on the cytoplasmic side.

This sequence belongs to the MHC class II family. Heterodimer of an alpha chain (DOA) and a beta chain (DOB). Forms a heterotetrameric complex with an HLA-DM molecule during intracellular transport in endosomal/lysosomal compartments in B-cells.

It localises to the endosome membrane. Its subcellular location is the lysosome membrane. Its function is as follows. Important modulator in the HLA class II restricted antigen presentation pathway by interaction with the HLA-DM molecule in B-cells. Modifies peptide exchange activity of HLA-DM. The sequence is that of HLA class II histocompatibility antigen, DO alpha chain (HLA-DOA) from Homo sapiens (Human).